The primary structure comprises 736 residues: MRNEPQITPELVAAHGLKPDEYERILKLIGREPTFTELGIFSAMWNEHCSYKSSRIHLKGLPTKAPWVIQGPGENAGVIDIGDGQAVVFKMESHNHPSYIEPYQGATTGVGGILRDVFTMGARPIACLNALSFGAPEHPKTRHLVSGVVAGIGGYGNSFGVPTVGGQTRFHTRYDGNILVNAMAVGLADADKIFYAAASGVNMPIVYLGSKTGRDGIHGASMASAEFDDSSEEKRPTVQVGDPFAEKLLLEACLEIMAADCVIAIQDMGAAGLTCSAVEMGAKGDLGVDLDLDSVPTRETGMSAYEMMLSESQERMLMVLKPEKEKEAEAIFRKWGLDFAVVGYTTPSKRFVVKHGGDVMADLPIKELGDEAPLYDRPHVASPALPVIHAREVKAPMAIIPALEKLIATPDLCSKRWIWEQYDHVILGNTVQRPGGDAAVVRVQDGPKGLALTVDVTPRYCEADPFEGGKQAVAEAWRNITAVGGRPLAITDNLNFGNPERPEIMGQFVGCLKGISEACRALDFPVVSGNVSLYNETNGRAILPTPSIGGVGLLDDFTKSASIAFKTEGEAILLIGETHGWLGQSVYLRDVCGREEGAPPPVDLAAEKRIGDVVRGMIHAGTATAAHDLSDGGLLVALAEMAMASGIGARLLAAPASIVPHAYWFGEDQARYLVTVPETEAGRVLAKMRGANVPCTRIGTTGGTALAIAGEASVEVATLRTRFESWLPGYMGGAAA.

His-48 is a catalytic residue. ATP-binding residues include Tyr-51 and Lys-90. Glu-92 is a binding site for Mg(2+). Substrate-binding positions include 93–96 (SHNH) and Arg-115. Residue His-94 is the Proton acceptor of the active site. Asp-116 contacts Mg(2+). Gln-239 serves as a coordination point for substrate. Asp-267 lines the Mg(2+) pocket. 311-313 (ESQ) contributes to the substrate binding site. ATP contacts are provided by Asp-492 and Gly-529. Residue Asn-530 coordinates Mg(2+). A substrate-binding site is contributed by Ser-532.

This sequence belongs to the FGAMS family. As to quaternary structure, monomer. Part of the FGAM synthase complex composed of 1 PurL, 1 PurQ and 2 PurS subunits.

It is found in the cytoplasm. It carries out the reaction N(2)-formyl-N(1)-(5-phospho-beta-D-ribosyl)glycinamide + L-glutamine + ATP + H2O = 2-formamido-N(1)-(5-O-phospho-beta-D-ribosyl)acetamidine + L-glutamate + ADP + phosphate + H(+). Its pathway is purine metabolism; IMP biosynthesis via de novo pathway; 5-amino-1-(5-phospho-D-ribosyl)imidazole from N(2)-formyl-N(1)-(5-phospho-D-ribosyl)glycinamide: step 1/2. Its function is as follows. Part of the phosphoribosylformylglycinamidine synthase complex involved in the purines biosynthetic pathway. Catalyzes the ATP-dependent conversion of formylglycinamide ribonucleotide (FGAR) and glutamine to yield formylglycinamidine ribonucleotide (FGAM) and glutamate. The FGAM synthase complex is composed of three subunits. PurQ produces an ammonia molecule by converting glutamine to glutamate. PurL transfers the ammonia molecule to FGAR to form FGAM in an ATP-dependent manner. PurS interacts with PurQ and PurL and is thought to assist in the transfer of the ammonia molecule from PurQ to PurL. The protein is Phosphoribosylformylglycinamidine synthase subunit PurL of Bradyrhizobium sp. (strain ORS 278).